The sequence spans 201 residues: Urease accessory protein UreG (201 aa).

Residue 12–19 (GPVGSGKT) participates in GTP binding.

This sequence belongs to the SIMIBI class G3E GTPase family. UreG subfamily. In terms of assembly, homodimer. UreD, UreF and UreG form a complex that acts as a GTP-hydrolysis-dependent molecular chaperone, activating the urease apoprotein by helping to assemble the nickel containing metallocenter of UreC. The UreE protein probably delivers the nickel.

Its subcellular location is the cytoplasm. Facilitates the functional incorporation of the urease nickel metallocenter. This process requires GTP hydrolysis, probably effectuated by UreG. In Dechloromonas aromatica (strain RCB), this protein is Urease accessory protein UreG.